The sequence spans 252 residues: 5'-nucleotidase SurE (252 aa).

Residues Asp-8, Asp-9, Ser-39, and Asn-91 each coordinate a divalent metal cation.

It belongs to the SurE nucleotidase family. The cofactor is a divalent metal cation.

It is found in the cytoplasm. The catalysed reaction is a ribonucleoside 5'-phosphate + H2O = a ribonucleoside + phosphate. Nucleotidase that shows phosphatase activity on nucleoside 5'-monophosphates. The polypeptide is 5'-nucleotidase SurE (Paraburkholderia xenovorans (strain LB400)).